Reading from the N-terminus, the 129-residue chain is Mini-ribonuclease 3-like protein (129 aa).

The active site involves aspartate 23.

This sequence belongs to the MrnC RNase family.

In terms of biological role, might be a ribonuclease involved in RNA processing. The sequence is that of Mini-ribonuclease 3-like protein (mrnCL) from Fusobacterium nucleatum subsp. nucleatum (strain ATCC 25586 / DSM 15643 / BCRC 10681 / CIP 101130 / JCM 8532 / KCTC 2640 / LMG 13131 / VPI 4355).